The following is a 96-amino-acid chain: UPF0235 protein ESA_00387 (96 aa).

The protein belongs to the UPF0235 family.

This chain is UPF0235 protein ESA_00387, found in Cronobacter sakazakii (strain ATCC BAA-894) (Enterobacter sakazakii).